The primary structure comprises 180 residues: Translation initiation factor IF-3 (180 aa).

The protein belongs to the IF-3 family. In terms of assembly, monomer.

It localises to the cytoplasm. In terms of biological role, IF-3 binds to the 30S ribosomal subunit and shifts the equilibrium between 70S ribosomes and their 50S and 30S subunits in favor of the free subunits, thus enhancing the availability of 30S subunits on which protein synthesis initiation begins. The sequence is that of Translation initiation factor IF-3 from Shewanella baltica (strain OS223).